The following is a 199-amino-acid chain: Elongation factor Ts (199 aa).

An involved in Mg(2+) ion dislocation from EF-Tu region spans residues 81-84; that stretch reads TDFV.

Belongs to the EF-Ts family.

Its subcellular location is the cytoplasm. Functionally, associates with the EF-Tu.GDP complex and induces the exchange of GDP to GTP. It remains bound to the aminoacyl-tRNA.EF-Tu.GTP complex up to the GTP hydrolysis stage on the ribosome. The sequence is that of Elongation factor Ts from Thermotoga petrophila (strain ATCC BAA-488 / DSM 13995 / JCM 10881 / RKU-1).